Reading from the N-terminus, the 864-residue chain is Receptor like protein 24 (864 aa).

Positions 1–29 (MKTVFKSLLLLHFLLLLLLCFVSPSSFFL) are cleaved as a signal peptide. Topologically, residues 30–830 (LKVPVGGLVA…EEKGEVINWK (801 aa)) are extracellular. Residues Asn61, Asn73, Asn94, and Asn112 are each glycosylated (N-linked (GlcNAc...) asparagine). 15 LRR repeats span residues 100-125 (FHQL…FCNL), 127-148 (KLKL…DLMG), 156-182 (LGKL…LFEL), 183-205 (HSLR…KFGN), 207-229 (NKLE…TISN), 230-253 (LTRI…VQNL), 254-277 (TKLS…LFTF), 279-303 (SLST…STSS), 305-326 (LEIM…ISKL), 327-350 (INLK…LLSP), 351-376 (LKSL…SYIP), 378-398 (SMES…ILKH), 399-423 (LQNL…LWTL), 425-448 (QLSF…VFVN), and 449-472 (LSVR…PLSI). Asn176, Asn194, Asn229, and Asn252 each carry an N-linked (GlcNAc...) asparagine glycan. The N-linked (GlcNAc...) asparagine glycan is linked to Asn298. An N-linked (GlcNAc...) asparagine glycan is attached at Asn338. N-linked (GlcNAc...) asparagine glycans are attached at residues Asn433 and Asn448. One copy of the LRR 16; degenerate repeat lies at 473–492 (IGFSAIHNSFTGEIPLSICN). N-linked (GlcNAc...) asparagine glycans are attached at residues Asn492 and Asn505. LRR repeat units lie at residues 493–514 (RTSL…PQCL), 515–538 (SNFM…FYTD), 539–562 (SSLK…LLNC), 564–585 (SLRF…WLKA), 586–610 (LPNL…HQGP), 613–637 (FPEL…FFVN), 688–712 (LTSY…IGLL), 713–735 (KALI…SFAN), 736–760 (LMNL…LGSL), and 762–785 (FLVY…QITG). N-linked (GlcNAc...) asparagine glycosylation is present at Asn561. Residue Asn719 is glycosylated (N-linked (GlcNAc...) asparagine). The chain crosses the membrane as a helical span at residues 831-851 (AVAIGYAPGLLFGLAIAHLIA). Over 852-864 (SYKPEWLVKIIGF) the chain is Cytoplasmic.

Belongs to the RLP family.

It localises to the cell membrane. The protein is Receptor like protein 24 of Arabidopsis thaliana (Mouse-ear cress).